The following is a 423-amino-acid chain: Histidine--tRNA ligase (423 aa).

The protein belongs to the class-II aminoacyl-tRNA synthetase family. Homodimer.

It localises to the cytoplasm. It carries out the reaction tRNA(His) + L-histidine + ATP = L-histidyl-tRNA(His) + AMP + diphosphate + H(+). The protein is Histidine--tRNA ligase of Orientia tsutsugamushi (strain Boryong) (Rickettsia tsutsugamushi).